Here is a 710-residue protein sequence, read N- to C-terminus: DNA ligase (710 aa).

The interval 1–36 is disordered; that stretch reads MTSSSPRHADPDENPYVEAPPTDFEPVGALSEDEAT. NAD(+) contacts are provided by residues 63–67, 111–112, and glutamate 147; these read DETYD and SI. Lysine 149 acts as the N6-AMP-lysine intermediate in catalysis. 3 residues coordinate NAD(+): arginine 170, glutamate 206, and lysine 353. Zn(2+) is bound by residues cysteine 444, cysteine 447, cysteine 460, and cysteine 466. The BRCT domain maps to 623–710; that stretch reads ETGDALDGLT…ERGVAWPPEE (88 aa). A disordered region spans residues 657-689; it reads ATSSVSGNTDYLVAGESPGRSKRDDADAEGVPV.

Belongs to the NAD-dependent DNA ligase family. LigA subfamily. Mg(2+) is required as a cofactor. Mn(2+) serves as cofactor.

It carries out the reaction NAD(+) + (deoxyribonucleotide)n-3'-hydroxyl + 5'-phospho-(deoxyribonucleotide)m = (deoxyribonucleotide)n+m + AMP + beta-nicotinamide D-nucleotide.. Functionally, DNA ligase that catalyzes the formation of phosphodiester linkages between 5'-phosphoryl and 3'-hydroxyl groups in double-stranded DNA using NAD as a coenzyme and as the energy source for the reaction. It is essential for DNA replication and repair of damaged DNA. The protein is DNA ligase of Halorubrum lacusprofundi (strain ATCC 49239 / DSM 5036 / JCM 8891 / ACAM 34).